We begin with the raw amino-acid sequence, 265 residues long: Mlc titration factor A (265 aa).

Positions 111, 148, 152, and 211 each coordinate Zn(2+).

This sequence belongs to the MtfA family. As to quaternary structure, interacts with Mlc. Zn(2+) serves as cofactor.

The protein localises to the cytoplasm. In terms of biological role, involved in the modulation of the activity of the glucose-phosphotransferase system (glucose-PTS). Interacts with the transcriptional repressor Mlc, preventing its interaction with DNA and leading to the modulation of expression of genes regulated by Mlc, including ptsG, which encodes the PTS system glucose-specific EIICB component. Functionally, shows zinc-dependent metallopeptidase activity. The protein is Mlc titration factor A of Klebsiella pneumoniae (strain 342).